The primary structure comprises 109 residues: N-alpha-acetyltransferase 38, NatC auxiliary subunit (109 aa).

In terms of domain architecture, Sm spans 23 to 101 (LARCKLENLL…VVSIEVETES (79 aa)).

It belongs to the snRNP Sm proteins family. Component of the N-terminal acetyltransferase C (NatC) complex.

It is found in the cytoplasm. The protein localises to the nucleus. Functionally, auxillary component of the N-terminal acetyltransferase C (NatC) complex which catalyzes acetylation of N-terminal methionine residues. N-terminal acetylation protects proteins from ubiquitination and degradation by the N-end rule pathway. This chain is N-alpha-acetyltransferase 38, NatC auxiliary subunit (naa38), found in Danio rerio (Zebrafish).